Reading from the N-terminus, the 294-residue chain is tRNA dimethylallyltransferase (294 aa).

10–17 (GPTAVGKT) contacts ATP. 12-17 (TAVGKT) serves as a coordination point for substrate. Residues 35–38 (DSQQ) are interaction with substrate tRNA.

This sequence belongs to the IPP transferase family. In terms of assembly, monomer. Mg(2+) is required as a cofactor.

The catalysed reaction is adenosine(37) in tRNA + dimethylallyl diphosphate = N(6)-dimethylallyladenosine(37) in tRNA + diphosphate. In terms of biological role, catalyzes the transfer of a dimethylallyl group onto the adenine at position 37 in tRNAs that read codons beginning with uridine, leading to the formation of N6-(dimethylallyl)adenosine (i(6)A). In Streptococcus pneumoniae (strain Taiwan19F-14), this protein is tRNA dimethylallyltransferase.